A 118-amino-acid chain; its full sequence is MTSQSQGIHQLLQAEKRAKDKLEEAKKRKGKRLKQAKEEAMVEIDQYRMQRDKEFRLKQSKIMGSQNNLSDEIEEQTLGKIQELNGHYNKYMESVMNQLLSMVCDMKPEIHVNYRATN.

A disordered region spans residues 1 to 34 (MTSQSQGIHQLLQAEKRAKDKLEEAKKRKGKRLK). A coiled-coil region spans residues 5-54 (SQGIHQLLQAEKRAKDKLEEAKKRKGKRLKQAKEEAMVEIDQYRMQRDKE). The segment covering 14-26 (AEKRAKDKLEEAK) has biased composition (basic and acidic residues).

Belongs to the V-ATPase G subunit family. V-ATPase is a heteromultimeric enzyme made up of two complexes: the ATP-hydrolytic V1 complex and the proton translocation V0 complex. The V1 complex consists of three catalytic AB heterodimers that form a heterohexamer, three peripheral stalks each consisting of EG heterodimers, one central rotor including subunits D and F, and the regulatory subunits C and H. The proton translocation complex V0 consists of the proton transport subunit a, a ring of proteolipid subunits c9c'', rotary subunit d, subunits e and f, and the accessory subunits ATP6AP1/Ac45 and ATP6AP2/PRR. In terms of tissue distribution, kidney.

Functionally, subunit of the V1 complex of vacuolar(H+)-ATPase (V-ATPase), a multisubunit enzyme composed of a peripheral complex (V1) that hydrolyzes ATP and a membrane integral complex (V0) that translocates protons. V-ATPase is responsible for acidifying and maintaining the pH of intracellular compartments and in some cell types, is targeted to the plasma membrane, where it is responsible for acidifying the extracellular environment. This Homo sapiens (Human) protein is V-type proton ATPase subunit G 3 (ATP6V1G3).